Reading from the N-terminus, the 239-residue chain is MECGDGPVPYRFSSPLHRGVLRSRYKRFLADVELENGQQIIAHCPNTGPMSGVCQVGAPVYLSHHPEPKRKLAYTWEMIQVDGVWVGINTSLPNRLVDWGLERGWFPQLAGFSRRQREVTCGKSKIDFLLTGDAGSAYLEVKNTTWAVGSRALFPDTVTTRGQKHLEDLIQIRQQGQRALLLYWINRADCTEFAPGEERDPRYARLFREALQAGVEMLPYRVEVSPTGIRPLGLAKIVV.

It belongs to the SfsA family.

This is Sugar fermentation stimulation protein homolog from Synechococcus sp. (strain JA-2-3B'a(2-13)) (Cyanobacteria bacterium Yellowstone B-Prime).